The primary structure comprises 431 residues: Neuronal pentraxin-2 (431 aa).

The signal sequence occupies residues 1-15 (MLALLAASVALAVAA). Asn-148 and Asn-189 each carry an N-linked (GlcNAc...) asparagine glycan. The Pentraxin (PTX) domain occupies 223–424 (DAFKVSLPLR…GASKWPVETC (202 aa)). Residues Cys-253 and Cys-313 are joined by a disulfide bond. Ca(2+)-binding residues include Asn-277, Glu-355, Gln-356, Asp-357, and Gln-367. A glycan (N-linked (GlcNAc...) asparagine) is linked at Asn-393.

In terms of assembly, homooligomer or heterooligomer (probably pentamer) with neuronal pentraxin receptor (NPTXR). It depends on Ca(2+) as a cofactor. As to expression, brain, pancreas, liver, heart and skeletal muscle. Highest levels are seen in the testis.

Its subcellular location is the secreted. Likely to play role in the modification of cellular properties that underlie long-term plasticity. Binds to agar matrix in a calcium-dependent manner. In Homo sapiens (Human), this protein is Neuronal pentraxin-2 (NPTX2).